Here is a 218-residue protein sequence, read N- to C-terminus: Leucine-rich repeat protein 2 (218 aa).

A signal peptide spans 1-27; that stretch reads MVAQNSRRELLAASLILTLALIRLTEA. 5 LRR repeats span residues 69 to 93, 94 to 117, 119 to 141, 142 to 165, and 167 to 190; these read HHQVTRLDLGNSNLSGHLVPELGKL, EHLQYLELYKNEIQGTIPSELGNL, SLISLDLYNNNLTGKIPSSLGKL, KSLVFLRLNENRLTGPIPRELTVI, and SLKVVDVSGNDLCGTIPVEGPFEH.

Its function is as follows. Probably involved in plant defense response. The sequence is that of Leucine-rich repeat protein 2 from Arabidopsis thaliana (Mouse-ear cress).